The following is a 1288-amino-acid chain: Outer capsid protein lambda-2 (1288 aa).

892–899 (GAAAAGKS) lines the ATP pocket.

This sequence belongs to the orthoreovirus lambda-2 protein family. As to quaternary structure, interacts with protein mu-NS; in viral inclusions.

The protein localises to the virion. It carries out the reaction a 5'-end diphospho-ribonucleoside in mRNA + GTP + H(+) = a 5'-end (5'-triphosphoguanosine)-ribonucleoside in mRNA + diphosphate. The catalysed reaction is a 5'-end (5'-triphosphoguanosine)-ribonucleoside in mRNA + S-adenosyl-L-methionine = a 5'-end (N(7)-methyl 5'-triphosphoguanosine)-ribonucleoside in mRNA + S-adenosyl-L-homocysteine. Its function is as follows. Outer capsid protein involved in mRNA capping. Catalyzes the last 3 enzymatic activities for formation of the 5' cap structure on the viral plus-strand transcripts, namely the RNA guanylyltransferase, RNA-7N- and RNA-2'O-methyltransferase activities. The polypeptide is Outer capsid protein lambda-2 (L2) (Reovirus type 2 (strain D5/Jones) (T2J)).